A 502-amino-acid polypeptide reads, in one-letter code: ATP synthase subunit alpha (502 aa).

The tract at residues 115–135 (VDGLGPINTTNTRPIESPAPG) is disordered. Residue 169-176 (GDRQTGKT) coordinates ATP.

This sequence belongs to the ATPase alpha/beta chains family. As to quaternary structure, F-type ATPases have 2 components, CF(1) - the catalytic core - and CF(0) - the membrane proton channel. CF(1) has five subunits: alpha(3), beta(3), gamma(1), delta(1), epsilon(1). CF(0) has three main subunits: a(1), b(2) and c(9-12). The alpha and beta chains form an alternating ring which encloses part of the gamma chain. CF(1) is attached to CF(0) by a central stalk formed by the gamma and epsilon chains, while a peripheral stalk is formed by the delta and b chains.

The protein resides in the cell membrane. It carries out the reaction ATP + H2O + 4 H(+)(in) = ADP + phosphate + 5 H(+)(out). Functionally, produces ATP from ADP in the presence of a proton gradient across the membrane. The alpha chain is a regulatory subunit. This Bacillus anthracis (strain A0248) protein is ATP synthase subunit alpha.